The primary structure comprises 607 residues: MPRKKPFSVKQKKKQLQDKRERKRGLQDGLRSSSNSRSGSRERREEQTDTSDGESVTHHIRRLNQQPSQGLGPRGYDPNRYRLHFERDSREEVERRKRAAREQVLQPVSAELLELDIREVYQPGSVLDFPRRPPWSYEMSKEQLMSQEERSFQDYLGKIHGAYSSEKLSYFEHNLETWRQLWRVLEMSDIVLLITDIRHPVVNFPPALYEYVTGELGLALVLVLNKVDLAPPALVVAWKHYFHQHYPQLHVVLFTSFPRDPRTPQDPSSVLKKSRRRGRGWTRALGPEQLLRACEAITVGKVDLSSWREKIARDVAGATWGNGSGEEEEEEDGPAVLVEQQTDSAMEPTGPTQERYKDGVVTIGCVGFPNVGKSSLINGLVGRKVVSVSRTPGHTRYFQTYFLTPSVKLCDCPGLIFPSLLPRQLQVLAGIYPIAQIQEPYTAVGYLASRIPVQALLHLRHPEAEDPSAEHPWCAWDICEAWAEKRGYKTAKAARNDVYRAANSLLRLAVDGRLSLCFHPPGYSEQKGTWESHPETTELVVLQGRVGPAGDEEEEEEEELSSSCEEEGEEDRDADEEGEGDEETPTSAPGSSLAGRNPYALLGEDEC.

Over residues 1–14 (MPRKKPFSVKQKKK) the composition is skewed to basic residues. Positions 1–81 (MPRKKPFSVK…GPRGYDPNRY (81 aa)) are disordered. A compositionally biased stretch (basic and acidic residues) spans 15–26 (QLQDKRERKRGL). Residues Ser-32, Ser-33, and Ser-34 each carry the phosphoserine modification. Phosphothreonine is present on residues Thr-48 and Thr-50. Phosphoserine is present on residues Ser-51 and Ser-68. In terms of domain architecture, CP-type G spans 178 to 418 (WRQLWRVLEM…LCDCPGLIFP (241 aa)). 225–228 (NKVD) is a GTP binding site. Ser-324 carries the post-translational modification Phosphoserine. GTP is bound by residues 367-374 (GFPNVGKS) and 411-415 (DCPGL). A disordered region spans residues 547–607 (GPAGDEEEEE…PYALLGEDEC (61 aa)). Acidic residues predominate over residues 550-584 (GDEEEEEEEELSSSCEEEGEEDRDADEEGEGDEET). Ser-561, Ser-562, and Ser-563 each carry phosphoserine.

Belongs to the TRAFAC class YlqF/YawG GTPase family.

In terms of biological role, possible regulatory or functional link with the histocompatibility cluster. The protein is Guanine nucleotide-binding protein-like 1 (GNL1) of Homo sapiens (Human).